The sequence spans 177 residues: Large ribosomal subunit protein uL6 (177 aa).

It belongs to the universal ribosomal protein uL6 family. Part of the 50S ribosomal subunit.

In terms of biological role, this protein binds to the 23S rRNA, and is important in its secondary structure. It is located near the subunit interface in the base of the L7/L12 stalk, and near the tRNA binding site of the peptidyltransferase center. This Serratia proteamaculans (strain 568) protein is Large ribosomal subunit protein uL6.